The chain runs to 346 residues: NADH-ubiquinone oxidoreductase chain 2 (346 aa).

11 helical membrane-spanning segments follow: residues P3–S23, H25–M45, Y59–M79, I96–P116, I122–L142, I149–G169, I178–P198, L200–I220, A237–L257, S274–M294, and I322–L342.

The protein belongs to the complex I subunit 2 family. In terms of assembly, core subunit of respiratory chain NADH dehydrogenase (Complex I) which is composed of 45 different subunits. Interacts with TMEM242.

The protein resides in the mitochondrion inner membrane. The catalysed reaction is a ubiquinone + NADH + 5 H(+)(in) = a ubiquinol + NAD(+) + 4 H(+)(out). Core subunit of the mitochondrial membrane respiratory chain NADH dehydrogenase (Complex I) which catalyzes electron transfer from NADH through the respiratory chain, using ubiquinone as an electron acceptor. Essential for the catalytic activity and assembly of complex I. The polypeptide is NADH-ubiquinone oxidoreductase chain 2 (Equus asinus (Donkey)).